The chain runs to 1401 residues: DNA-directed RNA polymerase subunit beta (1401 aa).

Belongs to the RNA polymerase beta chain family. As to quaternary structure, the RNAP catalytic core consists of 2 alpha, 1 beta, 1 beta' and 1 omega subunit. When a sigma factor is associated with the core the holoenzyme is formed, which can initiate transcription.

It carries out the reaction RNA(n) + a ribonucleoside 5'-triphosphate = RNA(n+1) + diphosphate. In terms of biological role, DNA-dependent RNA polymerase catalyzes the transcription of DNA into RNA using the four ribonucleoside triphosphates as substrates. The polypeptide is DNA-directed RNA polymerase subunit beta (Desulforapulum autotrophicum (strain ATCC 43914 / DSM 3382 / VKM B-1955 / HRM2) (Desulfobacterium autotrophicum)).